The primary structure comprises 605 residues: Elongation factor 4 (605 aa).

Positions 10 to 192 constitute a tr-type G domain; sequence KNIRNFAIVA…AIVMRLPPPH (183 aa). GTP-binding positions include 22-27 and 139-142; these read DHGKST and NKVD.

The protein belongs to the TRAFAC class translation factor GTPase superfamily. Classic translation factor GTPase family. LepA subfamily.

The protein localises to the cell inner membrane. It catalyses the reaction GTP + H2O = GDP + phosphate + H(+). Required for accurate and efficient protein synthesis under certain stress conditions. May act as a fidelity factor of the translation reaction, by catalyzing a one-codon backward translocation of tRNAs on improperly translocated ribosomes. Back-translocation proceeds from a post-translocation (POST) complex to a pre-translocation (PRE) complex, thus giving elongation factor G a second chance to translocate the tRNAs correctly. Binds to ribosomes in a GTP-dependent manner. In Chelativorans sp. (strain BNC1), this protein is Elongation factor 4.